Consider the following 346-residue polypeptide: Probable dual-specificity RNA methyltransferase RlmN (346 aa).

Residue Glu-92 is the Proton acceptor of the active site. A Radical SAM core domain is found at 98-332 (TDQRLTVCVS…VSLRASRGLD (235 aa)). A disulfide bridge links Cys-105 with Cys-337. Positions 112, 116, and 119 each coordinate [4Fe-4S] cluster. S-adenosyl-L-methionine-binding positions include 159–160 (GE), Ser-189, 218–220 (SLH), and Asn-294. The active-site S-methylcysteine intermediate is the Cys-337.

It belongs to the radical SAM superfamily. RlmN family. [4Fe-4S] cluster serves as cofactor.

It localises to the cytoplasm. The enzyme catalyses adenosine(2503) in 23S rRNA + 2 reduced [2Fe-2S]-[ferredoxin] + 2 S-adenosyl-L-methionine = 2-methyladenosine(2503) in 23S rRNA + 5'-deoxyadenosine + L-methionine + 2 oxidized [2Fe-2S]-[ferredoxin] + S-adenosyl-L-homocysteine. The catalysed reaction is adenosine(37) in tRNA + 2 reduced [2Fe-2S]-[ferredoxin] + 2 S-adenosyl-L-methionine = 2-methyladenosine(37) in tRNA + 5'-deoxyadenosine + L-methionine + 2 oxidized [2Fe-2S]-[ferredoxin] + S-adenosyl-L-homocysteine. In terms of biological role, specifically methylates position 2 of adenine 2503 in 23S rRNA and position 2 of adenine 37 in tRNAs. In Synechococcus sp. (strain CC9311), this protein is Probable dual-specificity RNA methyltransferase RlmN.